Reading from the N-terminus, the 286-residue chain is Pyridoxal kinase PdxY (286 aa).

Residues Ser9 and 44-45 (TQ) each bind substrate. ATP-binding positions include Asp111, Ala143, Glu148, Lys181, and 208-211 (RPLV). Residue Asp222 coordinates substrate.

The protein belongs to the pyridoxine kinase family. PdxY subfamily. As to quaternary structure, homodimer. Mg(2+) is required as a cofactor.

It catalyses the reaction pyridoxal + ATP = pyridoxal 5'-phosphate + ADP + H(+). It participates in cofactor metabolism; pyridoxal 5'-phosphate salvage; pyridoxal 5'-phosphate from pyridoxal: step 1/1. Pyridoxal kinase involved in the salvage pathway of pyridoxal 5'-phosphate (PLP). Catalyzes the phosphorylation of pyridoxal to PLP. This Pectobacterium atrosepticum (strain SCRI 1043 / ATCC BAA-672) (Erwinia carotovora subsp. atroseptica) protein is Pyridoxal kinase PdxY.